Consider the following 59-residue polypeptide: Large ribosomal subunit protein bL32 (59 aa).

Residues 1–22 (MAVPKKKTSNSKRDSRRAHWNR) are compositionally biased toward basic residues. A disordered region spans residues 1–59 (MAVPKKKTSNSKRDSRRAHWNRKANLAAQRALSTGKSILTGRAKGFEYPTKDDDEDDDE).

This sequence belongs to the bacterial ribosomal protein bL32 family.

The protein is Large ribosomal subunit protein bL32 of Acaryochloris marina (strain MBIC 11017).